We begin with the raw amino-acid sequence, 248 residues long: 14-3-3 protein (248 aa).

Coiled-coil stretches lie at residues 13 to 33 (MAQL…MRKI) and 91 to 111 (RQKI…LLQE). 135-136 (RY) is a binding site for O-phospho-L-serine. Thr214 carries the post-translational modification Phosphothreonine. The Putative polyglycylation target motif (T/G)X0-1(D/E)X1-3-G(D/E)X1-2(gE)2-4, where X is polar or negatively charged amino acid, and gE is polyglycylated glutamine signature appears at 237–248 (TDSAGDDNAEEK). A 5-glutamyl polyglycine modification is found at Glu246.

Belongs to the 14-3-3 family. In terms of assembly, homodimer. Homodimerizes via N-terminal domains. Oligomerizes forming homotrimers, homotetramers and protein filaments. Oligomerization is hindered by polyglycylation in vivo. Interacts with a large number of both cytosolic and membrane proteins in trophozoites and encysting parasites. Interacts with a serine/threonine protein kinase GL50803_112076 (gCDC7). Component of a multiprotein complex containing gCDC7 and GL50803_94117 (gDBF4), a regulatory subunit of gCDC7, during both the trophozoite and encysting stages of the parasite. Interacts with fructose-bisphosphate aldolase GL50803_11043 (gFBA), pyruvate kinase GL50803_17143 (gPyk), acetyl-CoA synthetase GL50803_13608 (gACS), protein kinase GL50803_22165 (gSTE), DEAD box RNA helicase GL50803_34684 (gVASA) and Golgi/cell cycle associated protein GL50803_17472 (gGCCA). Interacts with actin. Interacts with both monomeric phosphorylated and unphosphorylated actin. The interaction is enhanced by phosphorylation of actin and inhibited by Rho GTPase Rac. Post-translationally, phosphorylated constitutively throughout the life cycle. Phosphorylation is very high in trophozoites and encysting cells of 12 hours. Phosphorylated during excystation. Phosphorylation promotes its binding to various target proteins and is critical for encystation process. Phosphorylation modification is not influenced by polyglycylation modification. Polyglycylated on a glutamate residue, resulting in polyglycine chain on the gamma-carboxyl group. Polyglycylated by the tubulin--tyrosine ligase-like protein GL50803_8456 (gTTLL3). The polyglycine chain is shortened by metallopeptidases of the M20 family, namely dipeptidases GL50803_15832 (gDIP1) and GL50803_8407 (gDIP2). The length of the polyglycine chain is developmental stage-dependent. In trophozoites, glycine residues range from 10 to 31, with the greatest occurrence of 21 residues. In 12 hour encystation stage, glycine residues range from 6 to 22, with the greatest occurrence of 10 residues. The differential rate of polyglycylation/deglycylation during the encystation process regulates the intracellular localization of this protein. Relocalizes partially from the cytoplasm inside the nuclei following the shortening of the polyglycine chain in encysting cells. Polyglycylation modification is not influenced by phosphorylation modification. Polyglycylation prevents oligomerization in vivo.

It is found in the cytoplasm. The protein resides in the cytoskeleton. The protein localises to the nucleus. It localises to the cell projection. Its subcellular location is the cilium. It is found in the flagellum. The protein resides in the spindle. The protein localises to the nucleus envelope. It localises to the endoplasmic reticulum. Adapter protein implicated in the regulation of a large spectrum of both general and specialized signaling pathways. Binds to a large number of partners, usually by recognition of a phosphoserine or phosphothreonine motif. Binding generally results in the modulation of the activity of the binding partner. Binds with varying affinity to various synthetic phosphopeptides having a consensus binding motif RSX(pS/pT)XP, called mode-1, where X is any residue and pS/pT is a phosphorylated serine/threonine, and to synthetic phosphopeptides having a consensus binding motif Xp(S/T)X1-2-COOH, called mode-3, in which the phosphorylated residue occupies the penultimate C-terminal position in the target protein, but does not bind to their unphosphorylated counterparts. Binds to synthetic human RAF1 phosphopeptides, but not to their unphosphorylated forms. Binds to difopein, a polypeptide containing a phosphorylation-independent binding motif. Involved in encystation. Involved in cell proliferation. Required for actin and tubulin cytoskeletal organization. Regulates actin filament formation and nuclear size. This Giardia intestinalis (strain ATCC 50803 / WB clone C6) (Giardia lamblia) protein is 14-3-3 protein.